A 123-amino-acid polypeptide reads, in one-letter code: Crossover junction endodeoxyribonuclease Hjc (123 aa).

Residue glutamate 9 coordinates Mg(2+). The active site involves serine 29. Aspartate 33 and glutamate 46 together coordinate Mg(2+).

Belongs to the Holliday junction resolvase Hjc family. In terms of assembly, homodimer. Probably interacts with PCNA and RadB. The cofactor is Mg(2+). Requires Mn(2+) as cofactor.

It catalyses the reaction Endonucleolytic cleavage at a junction such as a reciprocal single-stranded crossover between two homologous DNA duplexes (Holliday junction).. Its activity is regulated as follows. Cleavage inhibited by RadB in the absence (but not presence) of ATP. A structure-specific endonuclease that resolves Holliday junction (HJ) intermediates during genetic recombination. Cleaves 4-way DNA junctions introducing paired nicks in opposing strands, leaving a 5'-terminal phosphate and a 3'-terminal hydroxyl group that are subsequently ligated to produce recombinant products. Cleaves both mobile and immobile junctions. Binds 4-way junction DNA, a synthetic Hj, binding is not competed by dsDNA. In Pyrococcus furiosus (strain ATCC 43587 / DSM 3638 / JCM 8422 / Vc1), this protein is Crossover junction endodeoxyribonuclease Hjc.